We begin with the raw amino-acid sequence, 121 residues long: Replication protein A 14 kDa subunit (121 aa).

Residues Lys-39 and Lys-88 each participate in a glycyl lysine isopeptide (Lys-Gly) (interchain with G-Cter in ubiquitin) cross-link.

The protein belongs to the replication factor A protein 3 family. In terms of assembly, component of the canonical replication protein A complex (RPA), a heterotrimer composed of RPA1, RPA2 and RPA3. Also a component of the aRPA, the alternative replication protein A complex, a trimeric complex similar to the replication protein A complex/RPA but where RPA1 and RPA3 are associated with RPA4 instead of RPA2. Post-translationally, ubiquitinated by RFWD3 at stalled replication forks in response to DNA damage: ubiquitination by RFWD3 does not lead to degradation by the proteasome and promotes removal of the RPA complex from stalled replication forks, promoting homologous recombination.

The protein resides in the nucleus. Functionally, as part of the heterotrimeric replication protein A complex (RPA/RP-A), binds and stabilizes single-stranded DNA intermediates, that form during DNA replication or upon DNA stress. It prevents their reannealing and in parallel, recruits and activates different proteins and complexes involved in DNA metabolism. Thereby, it plays an essential role both in DNA replication and the cellular response to DNA damage. In the cellular response to DNA damage, the RPA complex controls DNA repair and DNA damage checkpoint activation. Through recruitment of ATRIP activates the ATR kinase a master regulator of the DNA damage response. It is required for the recruitment of the DNA double-strand break repair factors RAD51 and RAD52 to chromatin, in response to DNA damage. Also recruits to sites of DNA damage proteins like XPA and XPG that are involved in nucleotide excision repair and is required for this mechanism of DNA repair. Also plays a role in base excision repair (BER), probably through interaction with UNG. Also recruits SMARCAL1/HARP, which is involved in replication fork restart, to sites of DNA damage. May also play a role in telomere maintenance. RPA3 has its own single-stranded DNA-binding activity and may be responsible for polarity of the binding of the complex to DNA. The chain is Replication protein A 14 kDa subunit (Rpa3) from Mus musculus (Mouse).